The sequence spans 184 residues: Peptide deformylase (184 aa).

Fe cation-binding residues include Cys111 and His154. Glu155 is a catalytic residue. His158 is a binding site for Fe cation.

Belongs to the polypeptide deformylase family. Requires Fe(2+) as cofactor.

It carries out the reaction N-terminal N-formyl-L-methionyl-[peptide] + H2O = N-terminal L-methionyl-[peptide] + formate. In terms of biological role, removes the formyl group from the N-terminal Met of newly synthesized proteins. Requires at least a dipeptide for an efficient rate of reaction. N-terminal L-methionine is a prerequisite for activity but the enzyme has broad specificity at other positions. This Pediococcus pentosaceus (strain ATCC 25745 / CCUG 21536 / LMG 10740 / 183-1w) protein is Peptide deformylase.